Reading from the N-terminus, the 1393-residue chain is MTKSLTSRKRIRKDFGRIPTVAPMPNLIEVQKSSYDQFLQIGVPVDKRTDSGLQEVFKSVFPIRDFSGKGELEFVAYELEEPKYDTDECQQRGMTFAAPLKVTLRLLVWDVDEETGARSIRDIKEQDVYMGDMPLMTSNGTFIINGTERVIVSQMHRSPGVFFDHDKGKTHSSGKFLFAARVIPYRGSWLDFEFDAKDMVYVRIDRRRKLPVTTLLYALEGAAATALREARTAEGRSVDPSEIAGMTSEEILDFFYQKLSYKRDDKGWKVDFKPDHLRGVKLMFDLVDAATGEVKIEAGTKVTPRAARKLAEDGMTEMRVFTEELVGRYAAEDMINEASGEIYAEAGEELTEAMLADMEKAGFTELRVLHIDHVNVGPYVRNTLAMDKNTTREEALIDIYRVMRPGEPPTLETADALFKGLFFDSERYDLSAVGRVKMNARLGFTMQEAPDTMRVLRKEDVLHIIRQLVELKDGKGEIDDIDHLGNRRVRSVGELMENQYRVGLLRMERAIRERMSSVDIDTVMPHDLINAKPAAAAVREFFGSSQLSQFMDQTNPLSEITHKRRLSALGPGGLTRERAGFEVRDVHPTHYGRICPIETPEGPNIGLINSLATFARVNQYGFIESPYRKVVEGTVTDEVTYMSAMEEGKYVIAQANAALTEDGHFADDLISCRKASDFEMVQPQDIDYIDVSPKQLVSVAAALIPFLENDDANRALMGSNMQRQAVPLVKAEAPYVGTGMEAAVARDSGATIAAKRAGVVQQVDATRIVIRATEDLKIAESGVDIYRLQKFQRSNQSTCINQRPLVKVGDLVGRGEILADGPLTEMGELALGRNVLVAFMPWNGYNFEDSILISERIVSDDVFTSIHIEEFEVMARDTKLGQEEITRDIPNVGEEALKNLDEAGIVYIGAEVQAGDILVGKVTPKGESPMTPEEKLLRAIFGEKASDVRDTSLRIPPGVTGTVVEVRVFNRRGVEKDERALAIERQEIESLAKDRDDERAILEGSFARRLKELLIGQKVVGGPRGMATGGVISEDLLSGYTAAQWRQIAVENDETATEIEGLKKAYEESIAKIQERFENKVEKLQRGDELPPGVLKMVKVFVAVKRKLQPGDKMAGRHGNKGVISKINPIEDMPYLEDGTYVDIVLNPLGVPSRMNVGQILETHLGWACRGLGAQIGALLEQVKRGLIPINDLREKLDDVYGPRHAKEDLAPMGDDQIKELAFNLRSGVPIATPVFDGARESDIVDMLRKAGLDSSGQVTLSDGRTGEPFDRKVTVGYIYMLKLHHLVDDKIHARSIGPYSLVTQQPLGGKAQFGGQRFGEMEVWALEAYGAAYTLQEMLTVKSDDVSGRTKVYEAIVKGDDTFEAGIPESFNVLVKEMRSLGLDVELGQSSF.

The protein belongs to the RNA polymerase beta chain family. In terms of assembly, the RNAP catalytic core consists of 2 alpha, 1 beta, 1 beta' and 1 omega subunit. When a sigma factor is associated with the core the holoenzyme is formed, which can initiate transcription.

It carries out the reaction RNA(n) + a ribonucleoside 5'-triphosphate = RNA(n+1) + diphosphate. Its function is as follows. DNA-dependent RNA polymerase catalyzes the transcription of DNA into RNA using the four ribonucleoside triphosphates as substrates. This chain is DNA-directed RNA polymerase subunit beta, found in Rhodospirillum rubrum (strain ATCC 11170 / ATH 1.1.1 / DSM 467 / LMG 4362 / NCIMB 8255 / S1).